A 210-amino-acid chain; its full sequence is Large ribosomal subunit protein uL3 (210 aa).

The segment at 125 to 154 (RHGFRGGPKTHGQSDRHRAPGSIGAGTTPG) is disordered.

Belongs to the universal ribosomal protein uL3 family. Part of the 50S ribosomal subunit. Forms a cluster with proteins L14 and L19.

In terms of biological role, one of the primary rRNA binding proteins, it binds directly near the 3'-end of the 23S rRNA, where it nucleates assembly of the 50S subunit. This Chloroflexus aggregans (strain MD-66 / DSM 9485) protein is Large ribosomal subunit protein uL3.